Reading from the N-terminus, the 348-residue chain is MSNCELTVLKPAEVKLSPRDREGIINPMYDCQPAGAQYAGIGIKDCIPLVHGGQGCTMFVRLLFAQHFKENFDVASTSLHEESAVFGGAKRVEEGVLVLARRYPNLRVIPIITTCSTEVIGDDIEGSIRVCNRALEAEFPDRKIYLAPVHTPSFKGSHVTGYAECVKSVFKTITDAHGKGQPSGKLNVFPGWVNPGDVVLLKHYFKEMDVEANIYMDTEDFDSPMLPNKSIETHGRTTVEDIADSANALATLSLARYEGNTTGELLQKTFAVPNALVNTPYGIKNTDDMLRKIAEVTGKEIPESLVRERGIALDALADLAHMFFANKKVAIFGHPDLVLGLAQFCIEV.

Positions 31, 56, 115, and 153 each coordinate [8Fe-7S] cluster.

It belongs to the NifD/NifK/NifE/NifN family. In terms of assembly, hexamer of two alpha, two beta, and two delta chains. The cofactor is [8Fe-7S] cluster.

The catalysed reaction is N2 + 8 reduced [2Fe-2S]-[ferredoxin] + 16 ATP + 16 H2O = H2 + 8 oxidized [2Fe-2S]-[ferredoxin] + 2 NH4(+) + 16 ADP + 16 phosphate + 6 H(+). In terms of biological role, this vanadium-iron protein is part of the nitrogenase complex that catalyzes the key enzymatic reactions in nitrogen fixation. The chain is Nitrogenase vanadium-iron protein beta chain (vnfK) from Azorhizophilus paspali (Azotobacter paspali).